The sequence spans 160 residues: E3 ubiquitin ligase complex SCF subunit sconC (160 aa).

Residues 101 to 160 (ILAANYLDIKALLDVGCKTVANMIKGKSPEEIRKTFNIQNDFTPEEEDQIRRENEWAEDR) form an interaction with the F-box domain of F-box proteins region.

Belongs to the SKP1 family. Component of the SCF (SKP1-CUL1-F-box protein) E3 ubiquitin ligase complexes.

It functions in the pathway protein modification; protein ubiquitination. In terms of biological role, essential component of the SCF (SKP1-CUL1-F-box protein) E3 ubiquitin ligase complexes, which mediate the ubiquitination and subsequent proteasomal degradation of target proteins. Controls sulfur metabolite repression, probably by mediating the inactivation or degradation of the metR transcription factor. The protein is E3 ubiquitin ligase complex SCF subunit sconC (sconC) of Talaromyces stipitatus (strain ATCC 10500 / CBS 375.48 / QM 6759 / NRRL 1006) (Penicillium stipitatum).